Consider the following 333-residue polypeptide: Fructose-1,6-bisphosphatase class 1 (333 aa).

Mg(2+)-binding residues include Glu92, Asp113, Leu115, and Asp116. Substrate is bound by residues Asp116–Ser119, Asn209, Tyr242, and Lys272. Position 278 (Glu278) interacts with Mg(2+).

Belongs to the FBPase class 1 family. In terms of assembly, homotetramer. Requires Mg(2+) as cofactor.

The protein resides in the cytoplasm. The enzyme catalyses beta-D-fructose 1,6-bisphosphate + H2O = beta-D-fructose 6-phosphate + phosphate. Its pathway is carbohydrate biosynthesis; Calvin cycle. The sequence is that of Fructose-1,6-bisphosphatase class 1 from Chlorobium phaeovibrioides (strain DSM 265 / 1930) (Prosthecochloris vibrioformis (strain DSM 265)).